Consider the following 455-residue polypeptide: Bifunctional protein GlmU (455 aa).

The pyrophosphorylase stretch occupies residues 1–230; that stretch reads MANRFAVILA…FDETIGINDR (230 aa). UDP-N-acetyl-alpha-D-glucosamine contacts are provided by residues 9 to 12, Lys-23, Gln-73, and 78 to 79; these read LAAG and GT. Asp-103 is a binding site for Mg(2+). Residues Gly-140, Glu-155, Asn-170, and Asn-228 each coordinate UDP-N-acetyl-alpha-D-glucosamine. Residue Asn-228 coordinates Mg(2+). The segment at 231–251 is linker; sequence IALAEAEKIMKKRINEQHMRN. The N-acetyltransferase stretch occupies residues 252 to 455; that stretch reads GVSIIDPEQT…KEEYASKFKK (204 aa). Residues Arg-333 and Lys-351 each contribute to the UDP-N-acetyl-alpha-D-glucosamine site. His-363 acts as the Proton acceptor in catalysis. Tyr-366 and Asn-377 together coordinate UDP-N-acetyl-alpha-D-glucosamine. Acetyl-CoA contacts are provided by residues 386–387, Ala-423, and Arg-440; that span reads NY.

The protein in the N-terminal section; belongs to the N-acetylglucosamine-1-phosphate uridyltransferase family. This sequence in the C-terminal section; belongs to the transferase hexapeptide repeat family. In terms of assembly, homotrimer. Requires Mg(2+) as cofactor.

It localises to the cytoplasm. The enzyme catalyses alpha-D-glucosamine 1-phosphate + acetyl-CoA = N-acetyl-alpha-D-glucosamine 1-phosphate + CoA + H(+). The catalysed reaction is N-acetyl-alpha-D-glucosamine 1-phosphate + UTP + H(+) = UDP-N-acetyl-alpha-D-glucosamine + diphosphate. It participates in nucleotide-sugar biosynthesis; UDP-N-acetyl-alpha-D-glucosamine biosynthesis; N-acetyl-alpha-D-glucosamine 1-phosphate from alpha-D-glucosamine 6-phosphate (route II): step 2/2. The protein operates within nucleotide-sugar biosynthesis; UDP-N-acetyl-alpha-D-glucosamine biosynthesis; UDP-N-acetyl-alpha-D-glucosamine from N-acetyl-alpha-D-glucosamine 1-phosphate: step 1/1. Its pathway is bacterial outer membrane biogenesis; LPS lipid A biosynthesis. Functionally, catalyzes the last two sequential reactions in the de novo biosynthetic pathway for UDP-N-acetylglucosamine (UDP-GlcNAc). The C-terminal domain catalyzes the transfer of acetyl group from acetyl coenzyme A to glucosamine-1-phosphate (GlcN-1-P) to produce N-acetylglucosamine-1-phosphate (GlcNAc-1-P), which is converted into UDP-GlcNAc by the transfer of uridine 5-monophosphate (from uridine 5-triphosphate), a reaction catalyzed by the N-terminal domain. The protein is Bifunctional protein GlmU of Oceanobacillus iheyensis (strain DSM 14371 / CIP 107618 / JCM 11309 / KCTC 3954 / HTE831).